The sequence spans 456 residues: uncharacterized protein (456 aa).

Positions leucine 3 to glutamate 61 constitute a TRAM domain. [4Fe-4S] cluster-binding residues include cysteine 74, cysteine 80, cysteine 83, and cysteine 163. S-adenosyl-L-methionine is bound by residues glutamine 289, tyrosine 318, glutamate 339, and aspartate 384. The active-site Nucleophile is cysteine 411.

This sequence belongs to the class I-like SAM-binding methyltransferase superfamily. RNA M5U methyltransferase family.

This is an uncharacterized protein from Clostridium acetobutylicum (strain ATCC 824 / DSM 792 / JCM 1419 / IAM 19013 / LMG 5710 / NBRC 13948 / NRRL B-527 / VKM B-1787 / 2291 / W).